The primary structure comprises 153 residues: uncharacterized protein (153 aa).

The protein belongs to the RusA family.

This is an uncharacterized protein from Xylella fastidiosa (strain Temecula1 / ATCC 700964).